We begin with the raw amino-acid sequence, 111 residues long: Flagellar hook-basal body complex protein FliE (111 aa).

The protein belongs to the FliE family.

It localises to the bacterial flagellum basal body. This is Flagellar hook-basal body complex protein FliE from Sinorhizobium fredii (strain NBRC 101917 / NGR234).